The sequence spans 229 residues: MKPRTPPDSPLLFDTAPLVPDFRLELKARKAGHWPVAGADEAGRGPLAGPVVAAAVILDPKRIPEGLNDSKQLSAQRREELFVQILATATVSIASSSSTRIDETDIRKASLDAMRRAICSLAIPASYVLTDGLDVPPGLDCPGQAVVKGDARSVSIAAASIVAKVTRDRMMARAHSVFPDYGFAAHVGYGTAQHRAGIERHGPCSLHRMSFRPLRKTENGPETDELLSE.

In terms of domain architecture, RNase H type-2 spans 34-223; that stretch reads WPVAGADEAG…LRKTENGPET (190 aa). Positions 40, 41, and 131 each coordinate a divalent metal cation. The tract at residues 209 to 229 is disordered; it reads MSFRPLRKTENGPETDELLSE.

The protein belongs to the RNase HII family. The cofactor is Mn(2+). Requires Mg(2+) as cofactor.

It is found in the cytoplasm. It carries out the reaction Endonucleolytic cleavage to 5'-phosphomonoester.. In terms of biological role, endonuclease that specifically degrades the RNA of RNA-DNA hybrids. The sequence is that of Ribonuclease HII from Rhizobium johnstonii (strain DSM 114642 / LMG 32736 / 3841) (Rhizobium leguminosarum bv. viciae).